A 542-amino-acid chain; its full sequence is Putative ankyrin repeat protein FPV115 (542 aa).

ANK repeat units follow at residues 33–62, 157–186, 218–247, 251–281, 285–314, 316–345, 347–375, and 378–407; these read FRNLPLHYAIYSRRKDIVETLLKSGYDPNS, DGLLPLYHAAAAGNTEMVELLLSYGAKTNL, NDINNILKTIQLYNADMLLFLIEIGLDINT, KGKTALHYACNSINCIETVKEIMKYGADINV, EGLTPLHSACKYGDLKLSKLLIEYGADVKV, TTSTVLNLAVESGNVELVKFLIEKNPEFIT, DYLSLSLAIRCKDINIVLLLLDAGMDVNS, and CISTPLHLGVILGNSNIVKLLLDHGANINA.

The protein is Putative ankyrin repeat protein FPV115 of Fowlpox virus (strain NVSL) (FPV).